The primary structure comprises 445 residues: Acyl-lipid (7-3)-desaturase (445 aa).

A Cytochrome b5 heme-binding domain is found at 11-91; it reads VAELRAAEVA…MSKFFVGSLD (81 aa). Heme-binding residues include His-50 and His-73. 2 consecutive transmembrane segments (helical) span residues 126 to 146 and 148 to 168; these read YWLKAAALVVAAVSIEGYMLL and GKTLLLSVFLGLVFAWIGLNI. Positions 170–174 match the Histidine box-1 motif; it reads HDANH. The short motif at 205-210 is the Histidine box-2 element; that stretch reads HVVMHH. 3 helical membrane passes run 247-267, 283-303, and 312-332; these read ILPGEAMYAFKLLFLDALELL, LFAPAVACKLGFWARFVALPL, and ALCICATVCTGSFYLAFFFFI. A Histidine box-3 motif is present at residues 380 to 384; it reads QIEHH.

It belongs to the fatty acid desaturase type 1 family. It depends on Fe(2+) as a cofactor.

Its subcellular location is the membrane. The enzyme catalyses a (7Z,10Z,13Z,16Z,19Z)-docosapentaenoyl-containing glycerolipid + 2 Fe(II)-[cytochrome b5] + O2 + 2 H(+) = a (4Z,7Z,10Z,13Z,16Z,19Z)-docosahexaenoyl-containing glycerolipid + 2 Fe(III)-[cytochrome b5] + 2 H2O. The catalysed reaction is a (7Z,10Z,13Z,16Z)-docosatetraenoyl-containing glycerolipid + 2 Fe(II)-[cytochrome b5] + O2 + 2 H(+) = a (4Z,7Z,10Z,13Z,16Z)-docosapentaenoyl-containing glycerolipid + 2 Fe(III)-[cytochrome b5] + 2 H2O. In terms of biological role, fatty acid desaturase that introduces a cis double bond at the 4-position in 22-carbon polyunsaturated fatty acids that contain a Delta(7) double bond, resulting in the production of delta-4 desaturated fatty acid docosahexanoic acid (DHA). Mediates desaturation of 22:5n-3 and 22:4n-6 into 22:6n-3 and 22:5n-6 respectively. This chain is Acyl-lipid (7-3)-desaturase, found in Diacronema lutheri (Unicellular marine alga).